The primary structure comprises 238 residues: Ribosomal RNA small subunit methyltransferase G (238 aa).

S-adenosyl-L-methionine is bound by residues G106, L111, 157 to 158 (IE), and R170.

It belongs to the methyltransferase superfamily. RNA methyltransferase RsmG family.

The protein localises to the cytoplasm. The enzyme catalyses guanosine(527) in 16S rRNA + S-adenosyl-L-methionine = N(7)-methylguanosine(527) in 16S rRNA + S-adenosyl-L-homocysteine. In terms of biological role, specifically methylates the N7 position of guanine in position 527 of 16S rRNA. The protein is Ribosomal RNA small subunit methyltransferase G of Psychrobacter cryohalolentis (strain ATCC BAA-1226 / DSM 17306 / VKM B-2378 / K5).